Reading from the N-terminus, the 275-residue chain is T cell receptor alpha chain MC.7.G5 (275 aa).

A signal peptide spans 1–21; that stretch reads MACPGFLWALVISTCLEFSMA. The region spanning 22–116 is the Ig-like V-type domain; it reads QTVTQSQPEM…AAMYFCAYRS (95 aa). A t cell receptor alpha variable 38-2DV8 region spans residues 22–116; that stretch reads QTVTQSQPEM…AAMYFCAYRS (95 aa). The cysteines at positions 43 and 112 are disulfide-linked. The CDR1 stretch occupies residues 47–53; it reads TSESDYY. Residues 71-81 form a CDR2 region; the sequence is QEAYKQQNATE. The N-linked (GlcNAc...) asparagine glycan is linked to Asn78. The CDR3 stretch occupies residues 112 to 124; it reads CAYRSAVNARLMF. Residues 119 to 134 are t cell receptor alpha joining 31; the sequence is NARLMFGDGTQLVVKP. The interval 136-275 is t cell receptor alpha constant; sequence IQNPDPAVYQ…LLMTLRLWSS (140 aa). One can recognise an Ig-like C1-type domain in the interval 154-242; sequence KSVCLFTDFD…LVEKSFETDT (89 aa). The cysteines at positions 157 and 207 are disulfide-linked. Residues Asn167, Asn201, Asn212, and Asn248 are each glycosylated (N-linked (GlcNAc...) asparagine). The connecting peptide stretch occupies residues 229-250; it reads CDVKLVEKSFETDTNLNFQNLS. Residues 251–273 traverse the membrane as a helical segment; sequence VIGFRILLLKVAGFNLLMTLRLW. The Cytoplasmic portion of the chain corresponds to 274-275; that stretch reads SS.

As to quaternary structure, disulfide-linked heterodimer with TRBV25-1*01J2S3*01C2*01 beta chain. The alpha-beta TR associates with the transmembrane signaling CD3 coreceptor proteins to form the TR-CD3 (TCR). The assembly of alpha-beta TR heterodimers with CD3 occurs in the endoplasmic reticulum where a single alpha-beta TR heterodimer associates with one CD3D-CD3E heterodimer, one CD3G-CD3E heterodimer and one CD247 homodimer forming a stable octameric structure. CD3D-CD3E and CD3G-CD3E heterodimers preferentially associate with TR alpha and TR beta chains (via TM domain), respectively. The association of the CD247 homodimer is the last step of TCR assembly in the endoplasmic reticulum and is required for transport to the cell surface. As to expression, expressed in MR1-restricted CD8-positive T cells.

It is found in the cell membrane. Functionally, the alpha chain of TRAV38-2DV8*01J31*01C*01/TRBV25-1*01J2S3*01C2*01 alpha-beta T cell receptor (TR) clonotype that displays pan-cancer cell recognition via the invariant MR1 molecule. On CD8-positive T cell clone MC.7.G5, likely recognizes tumor-specific or -associated metabolite(s) essential for cancer cell survival, triggering killing of many cancer cell types including lung, melanoma, leukemia, colon, breast, prostate, bone and ovarian cancer cells. Mediates cancer cell cytotoxicity in an HLA-independent manner. Has no reactivity to healthy cells, even stressed or infected by bacteria. Antigen recognition initiates TR-CD3 clustering on the cell surface and intracellular activation of LCK that phosphorylates the ITAM motifs of CD3G, CD3D, CD3E and CD247 enabling the recruitment of ZAP70. In turn, ZAP70 phosphorylates LAT, which recruits numerous signaling molecules to form the LAT signalosome. The LAT signalosome propagates signal branching to three major signaling pathways, the calcium, the mitogen-activated protein kinase (MAPK) kinase and the nuclear factor NF-kappa-B (NF-kB) pathways, leading to the mobilization of transcription factors that are critical for gene expression and essential for T cell differentiation into effector/memory T cells. In Homo sapiens (Human), this protein is T cell receptor alpha chain MC.7.G5.